A 607-amino-acid polypeptide reads, in one-letter code: UvrABC system protein C (607 aa).

The GIY-YIG domain occupies 15-94; it reads ENPGVYLMKN…IKRHRPYFNV (80 aa). The UVR domain maps to 204-239; that stretch reads DQVLKLLIRLMNEASARLDYETAALRRDQIASIKEV.

It belongs to the UvrC family. Interacts with UvrB in an incision complex.

The protein resides in the cytoplasm. The UvrABC repair system catalyzes the recognition and processing of DNA lesions. UvrC both incises the 5' and 3' sides of the lesion. The N-terminal half is responsible for the 3' incision and the C-terminal half is responsible for the 5' incision. This is UvrABC system protein C from Dehalococcoides mccartyi (strain ATCC BAA-2100 / JCM 16839 / KCTC 5957 / BAV1).